Consider the following 372-residue polypeptide: N-methyl-L-tryptophan oxidase (372 aa).

4-34 (DLIIIGSGSVGAAAGYYATRAGLNVLMTDAH) contributes to the FAD binding site. Cys-308 is subject to S-8alpha-FAD cysteine.

The protein belongs to the MSOX/MTOX family. MTOX subfamily. As to quaternary structure, monomer. It depends on FAD as a cofactor.

It catalyses the reaction N(alpha)-methyl-L-tryptophan + O2 + H2O = L-tryptophan + formaldehyde + H2O2. Functionally, catalyzes the oxidative demethylation of N-methyl-L-tryptophan. In Shigella sonnei (strain Ss046), this protein is N-methyl-L-tryptophan oxidase.